The following is a 278-amino-acid chain: Casein kinase II subunit beta (278 aa).

Disordered stretches follow at residues 1–22 and 78–111; these read MSQE…DSGA and DEEE…RNKS. Residue Ser2 is modified to N-acetylserine. A Phosphoserine modification is found at Ser2. The segment covering 78-94 has biased composition (acidic residues); that stretch reads DEEEDEDDVVEEDEVDQ.

The protein belongs to the casein kinase 2 subunit beta family. In terms of assembly, tetramer composed of an alpha subunit, an alpha' subunit, one beta subunit and one beta' subunit. Interacts with FACT subunits POB3 and SPT16. interacts with YTA7. In terms of processing, phosphorylated by alpha subunit.

In terms of biological role, regulatory subunit of casein kinase II/CK2. As part of the kinase complex regulates the basal catalytic activity of the alpha subunit a constitutively active serine/threonine-protein kinase that phosphorylates a large number of substrates containing acidic residues C-terminal to the phosphorylated serine or threonine. This is Casein kinase II subunit beta (CKB1) from Saccharomyces cerevisiae (strain ATCC 204508 / S288c) (Baker's yeast).